Reading from the N-terminus, the 657-residue chain is Serine/threonine-protein kinase BUR1 (657 aa).

A Protein kinase domain is found at 60–366 (YREDEKLGQG…AMSAKHHPWF (307 aa)). Residues 66–74 (LGQGTFGEV) and Lys-89 each bind ATP. Asp-195 (proton acceptor) is an active-site residue. Phosphothreonine; by CAK is present on Thr-240. At Ser-400 the chain carries Phosphoserine. Thr-405 carries the post-translational modification Phosphothreonine. Residues 414–657 (KGESPVVKNL…FQNSDIADLY (244 aa)) are disordered. Ser-417 is subject to Phosphoserine. Positions 489–501 (NNSSRNNRFSGNS) are enriched in low complexity. 3 stretches are compositionally biased toward polar residues: residues 535 to 552 (SRYQ…SPND), 564 to 595 (PETN…NGSR), and 614 to 625 (ISPSQGQHQLTS). The segment covering 627–649 (PIEKKNGSFKDERAKPDESKEFQ) has biased composition (basic and acidic residues). Position 634 is a phosphoserine (Ser-634).

The protein belongs to the protein kinase superfamily. CMGC Ser/Thr protein kinase family. CDC2/CDKX subfamily. Belongs to the BUR kinase complex composed of SGV1/BUR1 and BUR2. Interacts with BUR2 and RBP1.

The protein localises to the nucleus. The catalysed reaction is L-seryl-[protein] + ATP = O-phospho-L-seryl-[protein] + ADP + H(+). The enzyme catalyses L-threonyl-[protein] + ATP = O-phospho-L-threonyl-[protein] + ADP + H(+). It carries out the reaction [DNA-directed RNA polymerase] + ATP = phospho-[DNA-directed RNA polymerase] + ADP + H(+). In terms of biological role, serine/threonine-protein kinase component of the BUR kinase complex involved in transcription regulation. This complex phosphorylates 'Ser-120' of the UBC2/RAD6 ubiquitin-conjugating enzyme (E2), leading to monoubiquitination of histone H2B, the localization of the PAF1 complex to the chromatin, and the silencing of telomeric-associated genes. Also required for histone H3 'Lys-4' trimethylation. May phosphorylate the 'Ser-5' of the RBP1 carboxy-terminal domain (CTD) repeats. Necessary for the recovery from pheromone-induced growth arrest in the cell cycle G1 phase. The kinase activity of the complex requires the presence of BUR2. The chain is Serine/threonine-protein kinase BUR1 (SGV1) from Saccharomyces cerevisiae (strain ATCC 204508 / S288c) (Baker's yeast).